The primary structure comprises 509 residues: Steroid 17-alpha-hydroxylase/17,20 lyase (509 aa).

N202 is a substrate binding site. C442 is a heme binding site.

The protein belongs to the cytochrome P450 family. The cofactor is heme.

Its subcellular location is the endoplasmic reticulum membrane. The protein localises to the microsome membrane. It catalyses the reaction a C21-steroid + reduced [NADPH--hemoprotein reductase] + O2 = a 17alpha-hydroxy-C21-steroid + oxidized [NADPH--hemoprotein reductase] + H2O + H(+). It carries out the reaction progesterone + reduced [NADPH--hemoprotein reductase] + O2 = 17alpha-hydroxyprogesterone + oxidized [NADPH--hemoprotein reductase] + H2O + H(+). The enzyme catalyses pregnenolone + reduced [NADPH--hemoprotein reductase] + O2 = 17alpha-hydroxypregnenolone + oxidized [NADPH--hemoprotein reductase] + H2O + H(+). The catalysed reaction is 17alpha-hydroxyprogesterone + reduced [NADPH--hemoprotein reductase] + O2 = androst-4-ene-3,17-dione + acetate + oxidized [NADPH--hemoprotein reductase] + H2O + 2 H(+). It catalyses the reaction 17alpha-hydroxyprogesterone + reduced [NADPH--hemoprotein reductase] + O2 = 16alpha,17alpha-dihydroxyprogesterone + oxidized [NADPH--hemoprotein reductase] + H2O + H(+). It carries out the reaction 16alpha,17alpha-dihydroxyprogesterone + reduced [NADPH--hemoprotein reductase] + O2 = 6beta,16alpha,17alpha-trihydroxyprogesterone + oxidized [NADPH--hemoprotein reductase] + H2O + H(+). The enzyme catalyses 17alpha-hydroxypregnenolone + reduced [NADPH--hemoprotein reductase] + O2 = 3beta-hydroxyandrost-5-en-17-one + acetate + oxidized [NADPH--hemoprotein reductase] + H2O + 2 H(+). The catalysed reaction is 16alpha,17alpha-dihydroxypregnenolone + reduced [NADPH--hemoprotein reductase] + O2 = 3beta,16alpha-dihydroxy-androst-5-en-17-one + acetate + oxidized [NADPH--hemoprotein reductase] + H2O + 2 H(+). It catalyses the reaction 3beta-hydroxyandrost-5-en-17-one + reduced [NADPH--hemoprotein reductase] + O2 = 3beta,16alpha-dihydroxy-androst-5-en-17-one + oxidized [NADPH--hemoprotein reductase] + H2O + H(+). It carries out the reaction androst-4-ene-3,17-dione + reduced [NADPH--hemoprotein reductase] + O2 = 16alpha-hydroxyandrost-4-ene-3,17-dione + oxidized [NADPH--hemoprotein reductase] + H2O + H(+). It participates in steroid hormone biosynthesis. Its pathway is steroid biosynthesis; glucocorticoid biosynthesis. Regulated predominantly by intracellular cAMP levels. The 17,20-lyase activity is stimulated by cytochrome b5, which acts as an allosteric effector increasing the Vmax of the lyase activity. In terms of biological role, a cytochrome P450 monooxygenase involved in corticoid and androgen biosynthesis. Catalyzes 17-alpha hydroxylation of C21 steroids, which is common for both pathways. A second oxidative step, required only for androgen synthesis, involves an acyl-carbon cleavage. The 17-alpha hydroxy intermediates, as part of adrenal glucocorticoids biosynthesis pathway, are precursors of cortisol. Hydroxylates steroid hormones, pregnenolone and progesterone to form 17-alpha hydroxy metabolites, followed by the cleavage of the C17-C20 bond to form C19 steroids, dehydroepiandrosterone (DHEA) and androstenedione. Has 16-alpha hydroxylase activity. Catalyzes 16-alpha hydroxylation of 17-alpha hydroxy pregnenolone, followed by the cleavage of the C17-C20 bond to form 16-alpha-hydroxy DHEA. Also 16-alpha hydroxylates androgens, relevant for estriol synthesis. Mechanistically, uses molecular oxygen inserting one oxygen atom into a substrate, and reducing the second into a water molecule, with two electrons provided by NADPH via cytochrome P450 reductase (CPR; NADPH-ferrihemoprotein reductase). This chain is Steroid 17-alpha-hydroxylase/17,20 lyase (CYP17A1), found in Sus scrofa (Pig).